We begin with the raw amino-acid sequence, 279 residues long: Prepilin leader peptidase/N-methyltransferase (279 aa).

Over 1-16 the chain is Periplasmic; it reads MDDLREFAQLFPAWWF. Residues 17-35 traverse the membrane as a helical segment; the sequence is GALGVLGLIVGSFLNVVIY. Topologically, residues 36-104 are cytoplasmic; that stretch reads RLPIMLERRW…RSRCCHQSVS (69 aa). A helical transmembrane segment spans residues 105-123; that stretch reads VQYPLVEVITMLAFLAAGL. The Periplasmic portion of the chain corresponds to 124-130; it reads LWLPGMA. The helical transmembrane segment at 131–149 threads the bilayer; that stretch reads LWGALILLSFLLVLTVIDI. At 150–163 the chain is on the cytoplasmic side; it reads KTLLLPDELTLSLL. A helical transmembrane segment spans residues 164–182; it reads WMGLLFNLSGTFVSLNDAV. The Periplasmic portion of the chain corresponds to 183 to 185; sequence VGA. Residues 186 to 204 form a helical membrane-spanning segment; that stretch reads MAGYLSLWLLYWAFKYATG. The Cytoplasmic portion of the chain corresponds to 205 to 214; that stretch reads KEALGYGDFK. The helical transmembrane segment at 215 to 233 threads the bilayer; that stretch reads LLAALGAWLGWQALPNLVL. Over 234-236 the chain is Periplasmic; sequence VAA. Residues 237-254 form a helical membrane-spanning segment; that stretch reads LSGLVVTLIWRGLRKEDT. Residues 255 to 257 are Cytoplasmic-facing; sequence AKP. A helical transmembrane segment spans residues 258-276; it reads LAFGPWLAIGGVFGMIMNG. At 277 to 279 the chain is on the periplasmic side; the sequence is FNL.

Belongs to the peptidase A24 family.

It localises to the cell inner membrane. It catalyses the reaction Typically cleaves a -Gly-|-Phe- bond to release an N-terminal, basic peptide of 5-8 residues from type IV prepilin, and then N-methylates the new N-terminal amino group, the methyl donor being S-adenosyl-L-methionine.. Functionally, plays a role in type II pseudopili formation by proteolytically removing the leader sequence from substrate proteins and subsequently monomethylating the alpha-amino group of the newly exposed N-terminal phenylalanine. Substrates include proteins required for biogenesis of the type II general secretory apparatus. In Pectobacterium carotovorum subsp. carotovorum (Erwinia carotovora subsp. carotovora), this protein is Prepilin leader peptidase/N-methyltransferase (outO).